The chain runs to 579 residues: MQNSSVLSFLRERAGLQPDDEAFSFTDYEQDWAGVRKTLTWAQLYQRTLNVAHELRRHGSIRDRAVILAPQGLDYIIAFLGAMQAGFIAVPLSVPQAGSHDERVGAVLADTSPSVVLTTSAVADAIAKYVDHSDTDTVPAILEVDSPNLDVENKSNIRLTDAPSTAYLQYTSGSTRLPAGVMVTHRNLMVNFQQLMADYFAPTNGVAPLDLTIVSWLPFYHDMGLVLGVVAPILGGWRSELTSPISFLQRPARWIQAMATSSHPFSAGPNFAFELAARRTSDADIAGLDLGACQGIISGSERIHPATLNRFSDRFARINFRDDMMLPSYGLAEGTVYAASRPKGSSPEVVYFEPAKLSEGTVKRCEARTGAPLLSYGTPKSPIVRIVDSDTCIECPTGRVGEIWLHGDNVAEGYWHKPEETQRTFGGKLANPSPGTPEGPWLRTGDLGFISEDELFIVGRMKDLLIVYGRNHYPEDIESTVQEITGGRVAAISVPVDETEKLVTIIEVKKRGDSDAEAMQKLVAVKNNITAAISKSHGLNVADLVLVPPGSIPTTTSGKVRRTACVEQYRRQQFSRLDG.

This sequence belongs to the ATP-dependent AMP-binding enzyme family.

In Mycobacterium leprae (strain TN), this protein is Putative fatty-acid--CoA ligase fadD21 (fadD21).